We begin with the raw amino-acid sequence, 230 residues long: Probable septum site-determining protein MinC (230 aa).

This sequence belongs to the MinC family. Interacts with MinD and FtsZ.

Cell division inhibitor that blocks the formation of polar Z ring septums. Rapidly oscillates between the poles of the cell to destabilize FtsZ filaments that have formed before they mature into polar Z rings. Prevents FtsZ polymerization. In Erwinia tasmaniensis (strain DSM 17950 / CFBP 7177 / CIP 109463 / NCPPB 4357 / Et1/99), this protein is Probable septum site-determining protein MinC.